The chain runs to 250 residues: tRNA pseudouridine synthase A (250 aa).

Asp52 (nucleophile) is an active-site residue. Position 111 (Tyr111) interacts with substrate.

It belongs to the tRNA pseudouridine synthase TruA family. Homodimer.

The catalysed reaction is uridine(38/39/40) in tRNA = pseudouridine(38/39/40) in tRNA. In terms of biological role, formation of pseudouridine at positions 38, 39 and 40 in the anticodon stem and loop of transfer RNAs. The polypeptide is tRNA pseudouridine synthase A (Methylorubrum extorquens (strain PA1) (Methylobacterium extorquens)).